Reading from the N-terminus, the 258-residue chain is Serine protease sp-Eoc49 (258 aa).

The first 18 residues, 1 to 18 (MVLIRVLANLLVLQLSYA), serve as a signal peptide directing secretion. A Peptidase S1 domain is found at 25 to 249 (VVGGGECNRN…YTDWIQSIIA (225 aa)). A glycan (N-linked (GlcNAc...) asparagine) is linked at Asn44. A disulfide bond links Cys50 and Cys66. Catalysis depends on His65, which acts as the Charge relay system. 2 N-linked (GlcNAc...) asparagine glycosylation sites follow: Asn79 and Asn103. Asp110 acts as the Charge relay system in catalysis. Disulfide bonds link Cys142–Cys210, Cys174–Cys189, and Cys200–Cys225. Residue Asn154 is glycosylated (N-linked (GlcNAc...) asparagine). Ser204 (charge relay system) is an active-site residue. Residue Asn251 is glycosylated (N-linked (GlcNAc...) asparagine).

It belongs to the peptidase S1 family. Snake venom subfamily. In terms of assembly, monomer. In terms of tissue distribution, expressed by the venom gland.

It is found in the secreted. Its function is as follows. Snake venom serine protease that may act in the hemostasis system of the prey. The protein is Serine protease sp-Eoc49 of Echis ocellatus (Ocellated saw-scaled viper).